Reading from the N-terminus, the 880-residue chain is GRB2-associated and regulator of MAPK protein 2 (880 aa).

Residues Arg12–Arg320 form a CABIT region. 5 disordered regions span residues Pro385–Ser407, Ile461–Val483, Ser527–Ser548, Ser569–Pro611, and Ala633–Gln713. Composition is skewed to low complexity over residues Pro640 to Gly663 and Gln683 to Ser696. Ser740 is modified (phosphoserine). Positions Ser813–Arg877 constitute an SAM domain.

Belongs to the GAREM family.

Its function is as follows. Probable adapter protein that provides a critical link between cell surface epidermal growth factor receptor and the MAPK/ERK signaling pathway. This Mus musculus (Mouse) protein is GRB2-associated and regulator of MAPK protein 2 (Garem2).